The primary structure comprises 449 residues: Hyaluronidase (449 aa).

The signal sequence occupies residues 1–23 (MYHLWIKCLAAWIFLKRFNGVHV). 2 disulfides stabilise this stretch: Cys47–Cys340 and Cys211–Cys227. Residues Asn67, Asn103, and Asn111 are each glycosylated (N-linked (GlcNAc...) asparagine). Residue Glu135 is the Proton donor of the active site. Residue Asn153 is glycosylated (N-linked (GlcNAc...) asparagine). A glycan (N-linked (GlcNAc...) asparagine) is linked at Asn357. 3 disulfides stabilise this stretch: Cys365–Cys376, Cys370–Cys427, and Cys429–Cys438. Asn401 is a glycosylation site (N-linked (GlcNAc...) asparagine). In terms of domain architecture, EGF-like spans 427 to 438 (CQCYQGWKGLYC).

It belongs to the glycosyl hydrolase 56 family. In terms of assembly, monomer. In terms of tissue distribution, expressed by the venom gland.

It localises to the secreted. The enzyme catalyses Random hydrolysis of (1-&gt;4)-linkages between N-acetyl-beta-D-glucosamine and D-glucuronate residues in hyaluronate.. Snake venom endo-hyaluronidase that degrades hyaluronan to smaller oligosaccharide fragments. In venom, it is not toxic by itself, but increases the diffusion of other venom proteins by degrading the extracellular matrix. In addition, it displays antiedematogenic activity. The sequence is that of Hyaluronidase from Crotalus adamanteus (Eastern diamondback rattlesnake).